Consider the following 151-residue polypeptide: Late embryogenesis abundant protein Lea14-A (151 aa).

It belongs to the LEA type 2 family.

In Gossypium hirsutum (Upland cotton), this protein is Late embryogenesis abundant protein Lea14-A (LEA14-A).